The primary structure comprises 140 residues: Mediator of RNA polymerase II transcription subunit 21 (140 aa).

A coiled-coil region spans residues 52–130 (EERERTLEEL…CDELILKLAQ (79 aa)).

Belongs to the Mediator complex subunit 21 family. In terms of assembly, component of the Mediator complex.

The protein localises to the nucleus. Functionally, component of the Mediator complex, a coactivator involved in the regulated transcription of nearly all RNA polymerase II-dependent genes. Mediator functions as a bridge to convey information from gene-specific regulatory proteins to the basal RNA polymerase II transcription machinery. Mediator is recruited to promoters by direct interactions with regulatory proteins and serves as a scaffold for the assembly of a functional preinitiation complex with RNA polymerase II and the general transcription factors. This chain is Mediator of RNA polymerase II transcription subunit 21 (SRB7), found in Yarrowia lipolytica (strain CLIB 122 / E 150) (Yeast).